The following is a 613-amino-acid chain: Dihydroxy-acid dehydratase (613 aa).

Asp-81 contacts Mg(2+). A [2Fe-2S] cluster-binding site is contributed by Cys-122. Residues Asp-123 and Lys-124 each coordinate Mg(2+). Position 124 is an N6-carboxylysine (Lys-124). Position 195 (Cys-195) interacts with [2Fe-2S] cluster. Glu-491 serves as a coordination point for Mg(2+). Residue Ser-517 is the Proton acceptor of the active site.

This sequence belongs to the IlvD/Edd family. Homodimer. [2Fe-2S] cluster serves as cofactor. It depends on Mg(2+) as a cofactor.

It catalyses the reaction (2R)-2,3-dihydroxy-3-methylbutanoate = 3-methyl-2-oxobutanoate + H2O. It carries out the reaction (2R,3R)-2,3-dihydroxy-3-methylpentanoate = (S)-3-methyl-2-oxopentanoate + H2O. It participates in amino-acid biosynthesis; L-isoleucine biosynthesis; L-isoleucine from 2-oxobutanoate: step 3/4. The protein operates within amino-acid biosynthesis; L-valine biosynthesis; L-valine from pyruvate: step 3/4. In terms of biological role, functions in the biosynthesis of branched-chain amino acids. Catalyzes the dehydration of (2R,3R)-2,3-dihydroxy-3-methylpentanoate (2,3-dihydroxy-3-methylvalerate) into 2-oxo-3-methylpentanoate (2-oxo-3-methylvalerate) and of (2R)-2,3-dihydroxy-3-methylbutanoate (2,3-dihydroxyisovalerate) into 2-oxo-3-methylbutanoate (2-oxoisovalerate), the penultimate precursor to L-isoleucine and L-valine, respectively. This Vibrio parahaemolyticus serotype O3:K6 (strain RIMD 2210633) protein is Dihydroxy-acid dehydratase.